The primary structure comprises 93 residues: UPF0358 protein BLi01701/BL02974 (93 aa).

This sequence belongs to the UPF0358 family.

This is UPF0358 protein BLi01701/BL02974 from Bacillus licheniformis (strain ATCC 14580 / DSM 13 / JCM 2505 / CCUG 7422 / NBRC 12200 / NCIMB 9375 / NCTC 10341 / NRRL NRS-1264 / Gibson 46).